A 517-amino-acid chain; its full sequence is Crotonobetaine/carnitine--CoA ligase (517 aa).

Belongs to the ATP-dependent AMP-binding enzyme family.

It carries out the reaction 4-(trimethylamino)butanoate + ATP + CoA = 4-(trimethylamino)butanoyl-CoA + AMP + diphosphate. The enzyme catalyses crotonobetaine + ATP + CoA = crotonobetainyl-CoA + AMP + diphosphate. It catalyses the reaction (R)-carnitine + ATP + CoA = (R)-carnitinyl-CoA + AMP + diphosphate. Its pathway is amine and polyamine metabolism; carnitine metabolism. Catalyzes the transfer of CoA to carnitine, generating the initial carnitinyl-CoA needed for the CaiB reaction cycle. Also has activity toward crotonobetaine and gamma-butyrobetaine. In Salmonella paratyphi B (strain ATCC BAA-1250 / SPB7), this protein is Crotonobetaine/carnitine--CoA ligase.